Consider the following 113-residue polypeptide: Large ribosomal subunit protein P2 (113 aa).

The segment at 66-113 (PVGGGGAVAAADAAPAAAAGGDKKEAKKEEKKEESESEDDDMGFALFE) is disordered. Positions 73-85 (VAAADAAPAAAAG) are enriched in low complexity. Positions 86–99 (GDKKEAKKEEKKEE) are enriched in basic and acidic residues. A phosphoserine mark is found at Ser-100 and Ser-102.

Belongs to the eukaryotic ribosomal protein P1/P2 family. As to quaternary structure, P1 and P2 exist as dimers at the large ribosomal subunit.

Its function is as follows. Plays an important role in the elongation step of protein synthesis. This chain is Large ribosomal subunit protein P2 (RpLP2), found in Drosophila melanogaster (Fruit fly).